The chain runs to 76 residues: Small ribosomal subunit protein bS18 (76 aa).

It belongs to the bacterial ribosomal protein bS18 family. Part of the 30S ribosomal subunit. Forms a tight heterodimer with protein bS6.

In terms of biological role, binds as a heterodimer with protein bS6 to the central domain of the 16S rRNA, where it helps stabilize the platform of the 30S subunit. The sequence is that of Small ribosomal subunit protein bS18 from Pseudomonas fluorescens (strain ATCC BAA-477 / NRRL B-23932 / Pf-5).